We begin with the raw amino-acid sequence, 312 residues long: Aspartate carbamoyltransferase catalytic subunit (312 aa).

Residues R58 and T59 each coordinate carbamoyl phosphate. Residue K86 coordinates L-aspartate. Residues R108, H136, and Q139 each coordinate carbamoyl phosphate. 2 residues coordinate L-aspartate: R169 and R223. Positions 264 and 265 each coordinate carbamoyl phosphate.

The protein belongs to the aspartate/ornithine carbamoyltransferase superfamily. ATCase family. As to quaternary structure, heterododecamer (2C3:3R2) of six catalytic PyrB chains organized as two trimers (C3), and six regulatory PyrI chains organized as three dimers (R2).

It carries out the reaction carbamoyl phosphate + L-aspartate = N-carbamoyl-L-aspartate + phosphate + H(+). Its pathway is pyrimidine metabolism; UMP biosynthesis via de novo pathway; (S)-dihydroorotate from bicarbonate: step 2/3. Its function is as follows. Catalyzes the condensation of carbamoyl phosphate and aspartate to form carbamoyl aspartate and inorganic phosphate, the committed step in the de novo pyrimidine nucleotide biosynthesis pathway. The protein is Aspartate carbamoyltransferase catalytic subunit of Desulfitobacterium hafniense (strain DSM 10664 / DCB-2).